Consider the following 538-residue polypeptide: Calcium-dependent protein kinase 32 (538 aa).

The segment at 1–37 (MGNCCGTAGSLAQNDNKPKKGRKKQNPFSIDYGLHHG) is disordered. A lipid anchor (N-myristoyl glycine) is attached at G2. One can recognise a Protein kinase domain in the interval 63 to 321 (YTLGRELGRG…AQQVLDHPWL (259 aa)). ATP contacts are provided by residues 69-77 (LGRGEFGVT) and K92. D187 acts as the Proton acceptor in catalysis. Position 227 is a phosphoserine (S227). The interval 327 to 357 (APNVSLGETVRARLKQFTVMNKLKKRALRVI) is autoinhibitory domain. EF-hand domains follow at residues 364 to 399 (EEAS…LGHA), 400 to 435 (IPQD…LRKM), 436 to 470 (GNDE…DELG), and 471 to 506 (TSEE…GTDW). 18 residues coordinate Ca(2+): D377, S379, K383, E388, D413, D415, D417, Y419, E424, D449, N451, N453, Y455, E460, D484, D486, D488, and R490. S492 is modified (phosphoserine). E495 is a binding site for Ca(2+).

The protein belongs to the protein kinase superfamily. Ser/Thr protein kinase family. CDPK subfamily. As to quaternary structure, interacts with ABF4. Interacts with CNGC18. In terms of tissue distribution, expressed in embryos and most of the vegetative tissues.

It localises to the nucleus. Its subcellular location is the membrane. The catalysed reaction is L-seryl-[protein] + ATP = O-phospho-L-seryl-[protein] + ADP + H(+). It carries out the reaction L-threonyl-[protein] + ATP = O-phospho-L-threonyl-[protein] + ADP + H(+). Activated by calcium. Autophosphorylation may play an important role in the regulation of the kinase activity. Its function is as follows. May play a role in signal transduction pathways that involve calcium as a second messenger. Involved in maintaining Ca2+ homeostasis in pollen tube tips by regulating CNGC18. Functions as regulator of the calcium-mediated abscisic acid (ABA) signaling pathway. Phosphorylates ABA-responsive transcription factor ABF4 in vitro. In Arabidopsis thaliana (Mouse-ear cress), this protein is Calcium-dependent protein kinase 32.